Reading from the N-terminus, the 153-residue chain is Arginine repressor (153 aa).

The protein belongs to the ArgR family.

It is found in the cytoplasm. The protein operates within amino-acid biosynthesis; L-arginine biosynthesis [regulation]. In terms of biological role, regulates arginine biosynthesis genes. The protein is Arginine repressor of Actinobacillus pleuropneumoniae serotype 3 (strain JL03).